Here is a 319-residue protein sequence, read N- to C-terminus: Phospho-N-acetylmuramoyl-pentapeptide-transferase (319 aa).

The next 10 helical transmembrane spans lie at 1 to 21, 53 to 73, 77 to 97, 117 to 137, 140 to 160, 172 to 192, 195 to 215, 221 to 241, 249 to 269, and 298 to 318; these read MSILVAGLTLVSAFLITFLLM, TMGGLLFILSAALTCGWVGAW, LNGTLGALLFTLIAYGLIGMW, FLAQVVGAMVFAVIYQHEGFQ, FGLTDWGWFYALFIIFWMVGF, GLVTGLATISFAAYLVLALVQ, TEVALFCLAMIGTLLGFFPFN, IFMGDMGSLALGASLAAVALV, LIIGIVYVLETLSVILQVAYF, and GVFWLVGLIAGALTVATILFL.

The protein belongs to the glycosyltransferase 4 family. MraY subfamily. Mg(2+) is required as a cofactor.

It localises to the cell membrane. The enzyme catalyses UDP-N-acetyl-alpha-D-muramoyl-L-alanyl-gamma-D-glutamyl-L-lysyl-D-alanyl-D-alanine + di-trans,octa-cis-undecaprenyl phosphate = Mur2Ac(oyl-L-Ala-gamma-D-Glu-L-Lys-D-Ala-D-Ala)-di-trans,octa-cis-undecaprenyl diphosphate + UMP. The protein operates within cell wall biogenesis; peptidoglycan biosynthesis. Catalyzes the initial step of the lipid cycle reactions in the biosynthesis of the cell wall peptidoglycan: transfers peptidoglycan precursor phospho-MurNAc-pentapeptide from UDP-MurNAc-pentapeptide onto the lipid carrier undecaprenyl phosphate, yielding undecaprenyl-pyrophosphoryl-MurNAc-pentapeptide, known as lipid I. In Limosilactobacillus fermentum (strain NBRC 3956 / LMG 18251) (Lactobacillus fermentum), this protein is Phospho-N-acetylmuramoyl-pentapeptide-transferase.